Consider the following 511-residue polypeptide: ATP synthase subunit alpha (511 aa).

170 to 177 (GDRQTGKT) serves as a coordination point for ATP.

This sequence belongs to the ATPase alpha/beta chains family. As to quaternary structure, F-type ATPases have 2 components, CF(1) - the catalytic core - and CF(0) - the membrane proton channel. CF(1) has five subunits: alpha(3), beta(3), gamma(1), delta(1), epsilon(1). CF(0) has three main subunits: a(1), b(2) and c(9-12). The alpha and beta chains form an alternating ring which encloses part of the gamma chain. CF(1) is attached to CF(0) by a central stalk formed by the gamma and epsilon chains, while a peripheral stalk is formed by the delta and b chains.

Its subcellular location is the cell inner membrane. It catalyses the reaction ATP + H2O + 4 H(+)(in) = ADP + phosphate + 5 H(+)(out). Functionally, produces ATP from ADP in the presence of a proton gradient across the membrane. The alpha chain is a regulatory subunit. This is ATP synthase subunit alpha from Granulibacter bethesdensis (strain ATCC BAA-1260 / CGDNIH1).